Consider the following 199-residue polypeptide: Probable chemoreceptor glutamine deamidase CheD (199 aa).

Belongs to the CheD family.

It catalyses the reaction L-glutaminyl-[protein] + H2O = L-glutamyl-[protein] + NH4(+). In terms of biological role, probably deamidates glutamine residues to glutamate on methyl-accepting chemotaxis receptors (MCPs), playing an important role in chemotaxis. The chain is Probable chemoreceptor glutamine deamidase CheD from Cereibacter sphaeroides (strain ATCC 17025 / ATH 2.4.3) (Rhodobacter sphaeroides).